We begin with the raw amino-acid sequence, 124 residues long: uncharacterized protein (124 aa).

The first 21 residues, 1–21 (MFLLSLLHFFHPSLIPSLSLS), serve as a signal peptide directing secretion.

This is an uncharacterized protein from Schizosaccharomyces pombe (strain 972 / ATCC 24843) (Fission yeast).